Here is a 301-residue protein sequence, read N- to C-terminus: Alpha-ketoglutarate-dependent sulfate ester dioxygenase (301 aa).

His-81 is a substrate binding site. Fe cation contacts are provided by His-108 and Asp-110. Val-111 provides a ligand contact to substrate. Residue Thr-135 participates in 2-oxoglutarate binding. His-264 provides a ligand contact to Fe cation. 2-oxoglutarate contacts are provided by Arg-275 and Arg-279.

It belongs to the TfdA dioxygenase family. In terms of assembly, homotetramer. Requires Fe(2+) as cofactor.

The catalysed reaction is a primary linear alkyl sulfate ester + 2-oxoglutarate + O2 = an aldehyde + sulfate + succinate + CO2 + H(+). It carries out the reaction 2-ethylhexyl sulfate + 2-oxoglutarate + O2 = 2-ethylhexanal + sulfate + succinate + CO2 + H(+). It catalyses the reaction decyl sulfate + 2-oxoglutarate + O2 = decanal + sulfate + succinate + CO2 + H(+). The enzyme catalyses hexyl sulfate + 2-oxoglutarate + O2 = hexanal + sulfate + succinate + CO2 + H(+). The catalysed reaction is nonyl sufate + 2-oxoglutarate + O2 = nonanal + sulfate + succinate + CO2 + H(+). With respect to regulation, strongly stimulated by ascorbate. Functionally, catalyzes the oxygenolytic cleavage of 2-ethylhexyl sulfate (2-EHS) in the presence of alpha-ketoglutarate to yield 2-ethyl-hexanal and succinate, the decarboxylated form of alpha-ketoglutarate. It can accept a wide range of alpha-keto acids including 2-oxo-valerate, 2-oxo-adipate, 2-oxo-octanoate, 3-methyl-2-oxo-butyrate, oxaloacetate-alpha-ketoadipate, and alpha-ketooctanoate. It can catalyze the cleavage of medium-chain alkyl sulfate esters such as butylsulfate, pentylsulfate, hexylsulfate, heptylsulfate, octylsulfate, nonylsulfate, decylsulfate and sodium dodecyl sulfate (SDS). The sequence is that of Alpha-ketoglutarate-dependent sulfate ester dioxygenase from Pseudomonas putida (Arthrobacter siderocapsulatus).